The sequence spans 23 residues: Coenzyme PQQ synthesis protein A (23 aa).

A cross-link (pyrroloquinoline quinone (Glu-Tyr)) is located at residues 15-19; that stretch reads EVTLY.

It belongs to the PqqA family.

It participates in cofactor biosynthesis; pyrroloquinoline quinone biosynthesis. Its function is as follows. Required for coenzyme pyrroloquinoline quinone (PQQ) biosynthesis. PQQ is probably formed by cross-linking a specific glutamate to a specific tyrosine residue and excising these residues from the peptide. This is Coenzyme PQQ synthesis protein A from Colwellia psychrerythraea (strain 34H / ATCC BAA-681) (Vibrio psychroerythus).